Consider the following 554-residue polypeptide: 2-succinyl-5-enolpyruvyl-6-hydroxy-3-cyclohexene-1-carboxylate synthase (554 aa).

The protein belongs to the TPP enzyme family. MenD subfamily. As to quaternary structure, homodimer. Mg(2+) serves as cofactor. It depends on Mn(2+) as a cofactor. Thiamine diphosphate is required as a cofactor.

The enzyme catalyses isochorismate + 2-oxoglutarate + H(+) = 5-enolpyruvoyl-6-hydroxy-2-succinyl-cyclohex-3-ene-1-carboxylate + CO2. It functions in the pathway quinol/quinone metabolism; 1,4-dihydroxy-2-naphthoate biosynthesis; 1,4-dihydroxy-2-naphthoate from chorismate: step 2/7. It participates in quinol/quinone metabolism; menaquinone biosynthesis. In terms of biological role, catalyzes the thiamine diphosphate-dependent decarboxylation of 2-oxoglutarate and the subsequent addition of the resulting succinic semialdehyde-thiamine pyrophosphate anion to isochorismate to yield 2-succinyl-5-enolpyruvyl-6-hydroxy-3-cyclohexene-1-carboxylate (SEPHCHC). The protein is 2-succinyl-5-enolpyruvyl-6-hydroxy-3-cyclohexene-1-carboxylate synthase of Flavobacterium johnsoniae (strain ATCC 17061 / DSM 2064 / JCM 8514 / BCRC 14874 / CCUG 350202 / NBRC 14942 / NCIMB 11054 / UW101) (Cytophaga johnsonae).